We begin with the raw amino-acid sequence, 182 residues long: Large ribosomal subunit protein uL5 (182 aa).

This sequence belongs to the universal ribosomal protein uL5 family. As to quaternary structure, part of the 50S ribosomal subunit; part of the 5S rRNA/L5/L18/L25 subcomplex. Contacts the 5S rRNA and the P site tRNA. Forms a bridge to the 30S subunit in the 70S ribosome.

This is one of the proteins that bind and probably mediate the attachment of the 5S RNA into the large ribosomal subunit, where it forms part of the central protuberance. In the 70S ribosome it contacts protein S13 of the 30S subunit (bridge B1b), connecting the 2 subunits; this bridge is implicated in subunit movement. Contacts the P site tRNA; the 5S rRNA and some of its associated proteins might help stabilize positioning of ribosome-bound tRNAs. This is Large ribosomal subunit protein uL5 from Borrelia turicatae (strain 91E135).